Reading from the N-terminus, the 163-residue chain is Lysosomal enzyme trafficking factor (163 aa).

2 helical membrane-spanning segments follow: residues 40 to 60 and 98 to 118; these read MGWI…YYVF and LPFW…FLFL.

The protein belongs to the LYSET family. Interacts with GNPTAB; this interaction is important for proper localization of GNPTAB in Golgi stacks. Interacts with MBTPS1.

It is found in the golgi apparatus membrane. In terms of biological role, required for mannose-6-phosphate-dependent trafficking of lysosomal enzymes. LYSET bridges GlcNAc-1-phosphate transferase (GNPTAB), to the membrane-bound transcription factor site-1 protease (MBTPS1), thus allowing proteolytic activation of the GNPTAB. GNPTAB is involved in the regulation of M6P-dependent Golgi-to-lysosome trafficking of lysosomal enzymes. LYSET is thus an essential factor for maturation and delivery of lysosomal hydrolases. Functionally, (Microbial infection) Essential for infection by muliple viruses, including SARS-CoV-2, that utilize activated cathepsins for entry after M6P-dependent lysosomal transport. The chain is Lysosomal enzyme trafficking factor from Homo sapiens (Human).